Reading from the N-terminus, the 312-residue chain is Olfactory receptor 2B8 (312 aa).

The Extracellular portion of the chain corresponds to 1–25; that stretch reads MDQKNGSSFTGFILLGFSDRPQLEL. Asn5 carries N-linked (GlcNAc...) asparagine glycosylation. Residues 26-49 traverse the membrane as a helical segment; it reads VLFVVLLIFYIFTLLGNKTIIVLS. Topologically, residues 50-57 are cytoplasmic; sequence HLDPHLHT. The chain crosses the membrane as a helical span at residues 58 to 79; it reads PMYFFFSNLSFLDLCYTTGIVP. Topologically, residues 80–100 are extracellular; it reads QLLVNLRGADKSISYGGCVVQ. Residues Cys97 and Cys189 are joined by a disulfide bond. The helical transmembrane segment at 101–120 threads the bilayer; sequence LYISLGLGSTECVLLGVMVF. Over 121–139 the chain is Cytoplasmic; sequence DRYAAVCRPLHYTVVMHPC. A helical transmembrane segment spans residues 140 to 158; sequence LYVLMASTSWVIGFANSLL. Topologically, residues 159-195 are extracellular; it reads QTVLILLLTLCGRNKLEHFLCEVPPLLKLACVDTTMN. Residue Asn195 is glycosylated (N-linked (GlcNAc...) asparagine). The helical transmembrane segment at 196–219 threads the bilayer; the sequence is ESELFFVSVIILLVPVALIIFSYS. The Cytoplasmic segment spans residues 220–236; that stretch reads QIVRAVMRIKLATGQRK. The helical transmembrane segment at 237–259 threads the bilayer; sequence VFGTCGSHLTVVSLFYGTAIYAY. The Extracellular segment spans residues 260-272; sequence LQPGNNYSQDQGK. Residue Asn265 is glycosylated (N-linked (GlcNAc...) asparagine). A helical membrane pass occupies residues 273 to 292; sequence FISLFYTIITPMINPLIYTL. Residues 293 to 312 lie on the Cytoplasmic side of the membrane; it reads RNKDVKGALKKVLWKNYDSR.

The protein belongs to the G-protein coupled receptor 1 family.

It is found in the cell membrane. Odorant receptor. The sequence is that of Olfactory receptor 2B8 from Homo sapiens (Human).